We begin with the raw amino-acid sequence, 741 residues long: MLRYVYFNGFGMRQGLLKRCSSHILRRSYSSDIRNIGILAHIDAGKTTTTERMLFYAGKTRSLGEVHRGNTVTDYLTQERERGITICSSAVTFPWNGKRINLLDTPGHIDFTMEVEQSLHAVDGVIVVLDATAGVEAQTMTVWSQADKHRLPRLVFVNKMDRPDADFNKCVEDLKSKLETFPVCIQYPAKSNEGQLGIYDVITLEQLNWQQKDLGRSYSKLKLEPSDGLRQLQDKRNELIDQLSGLDDELADVVISTESFDKVSNELVNKALRRVICQQKAVPVLLGSAYKNIGIQCLMDAVNHYLPAPEERNEIYNCFGNELAGKVFKIVHDKQRGPLTLVRVMRGELKRGMRLTCSSGQAEVISKLYEPLADEYREVSVVSSGDVALCAGLKSTVTGDLLTSSQSSLKNAEKRFKQQRHSDGMSEEEDDDEDHHLDGLFDLAPQIPDAVYFCSIEPPSISSQTAMEQALRQLQREDPSLRVSYDSITGQTVLGGMGELHMDIIKSRILSEYKIDVDLGPLQIAYKETIEAPSLTTLSVEKEIAGTKQNVSITLELVKNQSEIFSLDKSPENLQNLNKLRPRIVQVLRKGSISALERGPRVGGQVVDTQIRLHNAIIGRGTADAFIMATAAQCVQKLLSENGTRLLEPIMALQIVAPSERVSSIMADLSRRRAIINDVLPKGDRNKLILINAPLAELPGYASTLRTISSGTASMTMQPCGFSNMNSSDESLAIRRAQGLE.

Residues 1–29 (MLRYVYFNGFGMRQGLLKRCSSHILRRSY) constitute a mitochondrion transit peptide. Residues 31–310 (SDIRNIGILA…AVNHYLPAPE (280 aa)) form the tr-type G domain. GTP contacts are provided by residues 40–47 (AHIDAGKT), 104–108 (DTPGH), and 158–161 (NKMD). Residues 408–436 (SLKNAEKRFKQQRHSDGMSEEEDDDEDHH) form a disordered region. Over residues 411 to 424 (NAEKRFKQQRHSDG) the composition is skewed to basic and acidic residues.

It belongs to the TRAFAC class translation factor GTPase superfamily. Classic translation factor GTPase family. EF-G/EF-2 subfamily.

Its subcellular location is the mitochondrion. Functionally, mitochondrial GTPase that mediates the disassembly of ribosomes from messenger RNA at the termination of mitochondrial protein biosynthesis. Not involved in the GTP-dependent ribosomal translocation step during translation elongation. The polypeptide is Ribosome-releasing factor 2, mitochondrial (EF-G2) (Drosophila willistoni (Fruit fly)).